A 357-amino-acid polypeptide reads, in one-letter code: NADH-quinone oxidoreductase subunit H (357 aa).

8 helical membrane passes run 22–42 (VAII…LMLV), 94–114 (IYLF…VWAV), 130–150 (LLYV…AGWA), 164–184 (AALL…VVMI), 199–219 (GGII…FFIS), 254–274 (FFLA…IMFF), 294–314 (IPGM…YLWV), and 333–353 (VFLP…QLQL).

It belongs to the complex I subunit 1 family. NDH-1 is composed of 14 different subunits. Subunits NuoA, H, J, K, L, M, N constitute the membrane sector of the complex.

It localises to the cell inner membrane. It carries out the reaction a quinone + NADH + 5 H(+)(in) = a quinol + NAD(+) + 4 H(+)(out). NDH-1 shuttles electrons from NADH, via FMN and iron-sulfur (Fe-S) centers, to quinones in the respiratory chain. The immediate electron acceptor for the enzyme in this species is believed to be ubiquinone. Couples the redox reaction to proton translocation (for every two electrons transferred, four hydrogen ions are translocated across the cytoplasmic membrane), and thus conserves the redox energy in a proton gradient. This subunit may bind ubiquinone. This Vesicomyosocius okutanii subsp. Calyptogena okutanii (strain HA) protein is NADH-quinone oxidoreductase subunit H.